The sequence spans 510 residues: NAD(P)H-quinone oxidoreductase subunit 2 A, chloroplastic (510 aa).

A run of 13 helical transmembrane segments spans residues 24–44, 57–77, 99–119, 124–144, 149–169, 183–203, 227–247, 295–315, 323–343, 354–374, 395–415, 418–438, and 484–504; these read LLLFHGSFIFPECILIFGLIL, IPWLYFISSTSLVMSIAALLF, IFQFLILLCSTLCIPLSVEYI, MAITEFLLFVLTATLGGMFLC, LITIFVAPECFSLCSYLLSGY, YLLMGGASSSILVHGFSWLYG, PGISIALIFITVGIGFKLSLA, WHLLLEILAILSMILGNLIAI, MLAYSSIGQIGYVIIGIIVGD, YMLFYISMNLGTFACIVSFGL, ALSLALCLLSLGGLPPLAGFF, LHLFWCGWQAGLYFLVSIGLL, and MIVCVIASTIPGISMNPIIAI.

The protein belongs to the complex I subunit 2 family. As to quaternary structure, NDH is composed of at least 16 different subunits, 5 of which are encoded in the nucleus.

The protein resides in the plastid. Its subcellular location is the chloroplast thylakoid membrane. It carries out the reaction a plastoquinone + NADH + (n+1) H(+)(in) = a plastoquinol + NAD(+) + n H(+)(out). It catalyses the reaction a plastoquinone + NADPH + (n+1) H(+)(in) = a plastoquinol + NADP(+) + n H(+)(out). Its function is as follows. NDH shuttles electrons from NAD(P)H:plastoquinone, via FMN and iron-sulfur (Fe-S) centers, to quinones in the photosynthetic chain and possibly in a chloroplast respiratory chain. The immediate electron acceptor for the enzyme in this species is believed to be plastoquinone. Couples the redox reaction to proton translocation, and thus conserves the redox energy in a proton gradient. This Ranunculus macranthus (Large buttercup) protein is NAD(P)H-quinone oxidoreductase subunit 2 A, chloroplastic.